The chain runs to 316 residues: Ribosomal RNA small subunit methyltransferase H (316 aa).

Residues 35 to 37 (GGH), aspartate 55, phenylalanine 79, aspartate 101, and glutamine 108 contribute to the S-adenosyl-L-methionine site. The tract at residues 291–316 (ALKPSDQEVELNPRSRSSVLRVAEKL) is disordered.

The protein belongs to the methyltransferase superfamily. RsmH family.

Its subcellular location is the cytoplasm. The enzyme catalyses cytidine(1402) in 16S rRNA + S-adenosyl-L-methionine = N(4)-methylcytidine(1402) in 16S rRNA + S-adenosyl-L-homocysteine + H(+). Specifically methylates the N4 position of cytidine in position 1402 (C1402) of 16S rRNA. This is Ribosomal RNA small subunit methyltransferase H from Vibrio cholerae serotype O1 (strain ATCC 39315 / El Tor Inaba N16961).